The chain runs to 303 residues: Probable 5-dehydro-4-deoxyglucarate dehydratase (303 aa).

This sequence belongs to the DapA family.

It catalyses the reaction 5-dehydro-4-deoxy-D-glucarate + H(+) = 2,5-dioxopentanoate + CO2 + H2O. Its pathway is carbohydrate acid metabolism; D-glucarate degradation; 2,5-dioxopentanoate from D-glucarate: step 2/2. This Agrobacterium fabrum (strain C58 / ATCC 33970) (Agrobacterium tumefaciens (strain C58)) protein is Probable 5-dehydro-4-deoxyglucarate dehydratase.